The sequence spans 392 residues: Branched-chain-amino-acid aminotransferase, mitochondrial (392 aa).

The N-terminal 27 residues, M1–Y27, are a transit peptide targeting the mitochondrion. Y168 lines the substrate pocket. K229 is subject to N6-(pyridoxal phosphate)lysine. K321 is subject to N6-acetyllysine.

Belongs to the class-IV pyridoxal-phosphate-dependent aminotransferase family. In terms of assembly, homodimer. It depends on pyridoxal 5'-phosphate as a cofactor. In terms of tissue distribution, ubiquitous.

It localises to the mitochondrion. It catalyses the reaction L-leucine + 2-oxoglutarate = 4-methyl-2-oxopentanoate + L-glutamate. The enzyme catalyses L-isoleucine + 2-oxoglutarate = (S)-3-methyl-2-oxopentanoate + L-glutamate. It carries out the reaction L-valine + 2-oxoglutarate = 3-methyl-2-oxobutanoate + L-glutamate. Functionally, catalyzes the first reaction in the catabolism of the essential branched chain amino acids leucine, isoleucine, and valine. May also function as a transporter of branched chain alpha-keto acids. In Homo sapiens (Human), this protein is Branched-chain-amino-acid aminotransferase, mitochondrial (BCAT2).